The chain runs to 93 residues: Protein VNG_0358C (93 aa).

The protein is Protein VNG_0358C of Halobacterium salinarum (strain ATCC 700922 / JCM 11081 / NRC-1) (Halobacterium halobium).